Consider the following 209-residue polypeptide: uncharacterized protein (209 aa).

The protein resides in the plastid. The protein localises to the chloroplast. This is an uncharacterized protein from Porphyra purpurea (Red seaweed).